The sequence spans 573 residues: 60 kDa lysophospholipase (573 aa).

One can recognise an Asparaginase/glutaminase domain in the interval arginine 9 to aspartate 355. Catalysis depends on threonine 19, which acts as the Acyl-ester intermediate. The segment at threonine 41–glutamate 350 is asparaginase. Residues aspartate 84–serine 86 and threonine 116–aspartate 117 contribute to the substrate site. ANK repeat units follow at residues glycine 141–proline 170, alanine 399–leucine 429, asparagine 433–threonine 462, aspartate 466–threonine 495, and aspartate 533–alanine 562.

It in the N-terminal section; belongs to the asparaginase 1 family. Monomer.

It catalyses the reaction a 1-acyl-sn-glycero-3-phosphocholine + H2O = sn-glycerol 3-phosphocholine + a fatty acid + H(+). It carries out the reaction L-asparagine + H2O = L-aspartate + NH4(+). The catalysed reaction is a 1-O-alkyl-2-acetyl-sn-glycero-3-phosphocholine + H2O = a 1-O-alkyl-sn-glycero-3-phosphocholine + acetate + H(+). The enzyme catalyses 1-hexadecanoyl-sn-glycero-3-phosphocholine + H2O = sn-glycerol 3-phosphocholine + hexadecanoate + H(+). It catalyses the reaction 2 1-hexadecanoyl-sn-glycero-3-phosphocholine = 1,2-dihexadecanoyl-sn-glycero-3-phosphocholine + sn-glycerol 3-phosphocholine. It carries out the reaction 1-octadecanoyl-sn-glycero-3-phosphocholine + H2O = octadecanoate + sn-glycerol 3-phosphocholine + H(+). The catalysed reaction is 1-(9Z-octadecenoyl)-sn-glycero-3-phosphocholine + H2O = sn-glycerol 3-phosphocholine + (9Z)-octadecenoate + H(+). The enzyme catalyses 1-hexadecanoyl-sn-glycero-3-phosphoethanolamine + H2O = sn-glycero-3-phosphoethanolamine + hexadecanoate + H(+). It catalyses the reaction 1-(9Z-octadecenoyl)-sn-glycero-3-phosphoethanolamine + H2O = sn-glycero-3-phosphoethanolamine + (9Z)-octadecenoate + H(+). It carries out the reaction 1-hexadecanoyl-sn-glycero-3-phosphoethanolamine + 1-hexadecanoyl-sn-glycero-3-phosphocholine = 1,2-dihexadecanoyl-sn-glycero-3-phosphoethanolamine + sn-glycerol 3-phosphocholine. The catalysed reaction is 2-(5Z,8Z,11Z,14Z)-eicosatetraenoyl-sn-glycero-3-phosphocholine + H2O = sn-glycerol 3-phosphocholine + (5Z,8Z,11Z,14Z)-eicosatetraenoate + H(+). The enzyme catalyses 2-hexadecanoyl-sn-glycero-3-phosphocholine + H2O = sn-glycerol 3-phosphocholine + hexadecanoate + H(+). It catalyses the reaction 2 2-hexadecanoyl-sn-glycero-3-phosphocholine = 1,2-dihexadecanoyl-sn-glycero-3-phosphocholine + sn-glycerol 3-phosphocholine. It carries out the reaction 1-O-(9Z)-octadecenoyl-2-O-acetyl-sn-glycero-3-phosphocholine + H2O = 2-acetyl-sn-glycero-3-phosphocholine + (9Z)-octadecenoate + H(+). The catalysed reaction is a 1-acyl-sn-glycero-3-phospho-(1D-myo-inositol) + 1-hexadecanoyl-sn-glycero-3-phosphocholine = a 1-acyl-2-hexadecanoyl-sn-glycero-3-phospho-(1D-myo-inositol) + sn-glycerol 3-phosphocholine. The enzyme catalyses 2 2-(5Z,8Z,11Z,14Z)-eicosatetraenoyl-sn-glycero-3-phosphocholine = 1,2-di-(5Z,8Z,11Z,14Z-eicosatetraenoyl)-sn-glycero-3-phosphocholine + sn-glycerol 3-phosphocholine. Its function is as follows. Exhibits lysophospholipase, transacylase, PAF acetylhydrolase and asparaginase activities. Can catalyze three types of transacylation reactions: (1) acyl transfer from 1-acyl-sn-glycero-3-phosphocholine (1-acyl-GPC) to the sn-1(3) positions of glycerol and 2-acylglycerol (sn-1 to -1(3) transfer), (2) acyl transfer from 1-acyl-GPC to the sn-2 positions of 1-acyl-GPC, 1-acyl-sn-glycero-3-phosphoethanolamine (1-acyl-GPE), and other lysophospholipids (sn-1 to -2 transfer) and (3) acyl transfer from 2-acyl-GPC to the sn-1 position of 2-acyl-GPC and 2-acyl-GPE (sn-2 to -1 transfer). Mediates the synthesis of 1-arachidonoyl species of phospholipids by transferring the arachidonoyl residue from 2-arachidonoyl lysophospholipid to the sn-1 position of 2-acyl lysophospholipid. The chain is 60 kDa lysophospholipase (ASPG) from Homo sapiens (Human).